The sequence spans 213 residues: Orotate phosphoribosyltransferase (213 aa).

Residue Lys26 coordinates 5-phospho-alpha-D-ribose 1-diphosphate. 34–35 contacts orotate; sequence FF. Residues 72-73, Arg99, Lys100, Lys103, His105, and 124-132 contribute to the 5-phospho-alpha-D-ribose 1-diphosphate site; these read YK and DDVITAGTA. 2 residues coordinate orotate: Thr128 and Arg156.

It belongs to the purine/pyrimidine phosphoribosyltransferase family. PyrE subfamily. In terms of assembly, homodimer. Mg(2+) is required as a cofactor.

It catalyses the reaction orotidine 5'-phosphate + diphosphate = orotate + 5-phospho-alpha-D-ribose 1-diphosphate. It functions in the pathway pyrimidine metabolism; UMP biosynthesis via de novo pathway; UMP from orotate: step 1/2. Functionally, catalyzes the transfer of a ribosyl phosphate group from 5-phosphoribose 1-diphosphate to orotate, leading to the formation of orotidine monophosphate (OMP). The polypeptide is Orotate phosphoribosyltransferase (Vibrio atlanticus (strain LGP32) (Vibrio splendidus (strain Mel32))).